The chain runs to 318 residues: Curved DNA-binding protein (318 aa).

The J domain occupies 5–69; it reads DYYKILGVEP…QKRAEFDEIR (65 aa). The interval 111-130 is disordered; the sequence is GGGNPFGGARQQQRSAGRRG.

The protein resides in the cytoplasm. Its subcellular location is the nucleoid. Functionally, DNA-binding protein that preferentially recognizes a curved DNA sequence. It is probably a functional analog of DnaJ; displays overlapping activities with DnaJ, but functions under different conditions, probably acting as a molecular chaperone in an adaptive response to environmental stresses other than heat shock. Lacks autonomous chaperone activity; binds native substrates and targets them for recognition by DnaK. Its activity is inhibited by the binding of CbpM. The chain is Curved DNA-binding protein from Pseudomonas putida (strain GB-1).